A 285-amino-acid chain; its full sequence is Nucleotide-binding protein Glov_2163 (285 aa).

8 to 15 (GMSGSGKS) contacts ATP. 59 to 62 (DIRG) provides a ligand contact to GTP.

This sequence belongs to the RapZ-like family.

Displays ATPase and GTPase activities. The protein is Nucleotide-binding protein Glov_2163 of Trichlorobacter lovleyi (strain ATCC BAA-1151 / DSM 17278 / SZ) (Geobacter lovleyi).